The primary structure comprises 160 residues: Epithelial membrane protein 1 (160 aa).

A helical membrane pass occupies residues M1–V21. A glycan (N-linked (GlcNAc...) asparagine) is linked at N43. 3 consecutive transmembrane segments (helical) span residues F67–F87, F95–I115, and F137–L157.

The protein belongs to the PMP-22/EMP/MP20 family. In terms of tissue distribution, most prominently found in the gastrointestinal tract, skin, lung, and brain but not in liver.

The protein resides in the membrane. The polypeptide is Epithelial membrane protein 1 (Emp1) (Rattus norvegicus (Rat)).